Reading from the N-terminus, the 1060-residue chain is DNA-directed RNA polymerase subunit beta (1060 aa).

This sequence belongs to the RNA polymerase beta chain family. In terms of assembly, in plastids the minimal PEP RNA polymerase catalytic core is composed of four subunits: alpha, beta, beta', and beta''. When a (nuclear-encoded) sigma factor is associated with the core the holoenzyme is formed, which can initiate transcription.

The protein localises to the plastid. Its subcellular location is the chloroplast. It catalyses the reaction RNA(n) + a ribonucleoside 5'-triphosphate = RNA(n+1) + diphosphate. Functionally, DNA-dependent RNA polymerase catalyzes the transcription of DNA into RNA using the four ribonucleoside triphosphates as substrates. This chain is DNA-directed RNA polymerase subunit beta, found in Helianthus annuus (Common sunflower).